An 87-amino-acid polypeptide reads, in one-letter code: Small ribosomal subunit protein uS15 (87 aa).

Belongs to the universal ribosomal protein uS15 family. In terms of assembly, part of the 30S ribosomal subunit. Forms a bridge to the 50S subunit in the 70S ribosome, contacting the 23S rRNA.

One of the primary rRNA binding proteins, it binds directly to 16S rRNA where it helps nucleate assembly of the platform of the 30S subunit by binding and bridging several RNA helices of the 16S rRNA. Functionally, forms an intersubunit bridge (bridge B4) with the 23S rRNA of the 50S subunit in the ribosome. In Pseudothermotoga lettingae (strain ATCC BAA-301 / DSM 14385 / NBRC 107922 / TMO) (Thermotoga lettingae), this protein is Small ribosomal subunit protein uS15.